Consider the following 216-residue polypeptide: Adenylate kinase (216 aa).

Residue 10–15 (GAGKGT) participates in ATP binding. The segment at 30–59 (STGDMFRAAMKAETEMGLQAKSFIDKGALV) is NMP. AMP contacts are provided by residues Thr-31, Arg-36, 57 to 59 (ALV), 85 to 88 (GFPR), and Gln-92. Residues 126-163 (GRRICKECGATYHLEFNPPAKADVCDKCGGELYQRSDD) are LID. Arg-127 contributes to the ATP binding site. 2 residues coordinate Zn(2+): Cys-130 and Cys-133. 136–137 (TY) is an ATP binding site. Residues Cys-150 and Cys-153 each contribute to the Zn(2+) site. Residues Arg-160 and Arg-171 each coordinate AMP. ATP is bound at residue Gln-199.

It belongs to the adenylate kinase family. In terms of assembly, monomer.

The protein localises to the cytoplasm. It catalyses the reaction AMP + ATP = 2 ADP. It functions in the pathway purine metabolism; AMP biosynthesis via salvage pathway; AMP from ADP: step 1/1. Catalyzes the reversible transfer of the terminal phosphate group between ATP and AMP. Plays an important role in cellular energy homeostasis and in adenine nucleotide metabolism. The polypeptide is Adenylate kinase (Bacillus cereus (strain ATCC 10987 / NRS 248)).